The following is a 513-amino-acid chain: Aromatic amino acid aminotransferase 2 (513 aa).

Residues Ser90 and Ser92 each carry the phosphoserine modification. Residues Tyr102, 143–144, Asn232, Tyr263, and 314–316 contribute to the pyridoxal 5'-phosphate site; these read SN and TFS. Residue Asn232 participates in substrate binding. Position 317 is an N6-(pyridoxal phosphate)lysine (Lys317). Pyridoxal 5'-phosphate is bound at residue Arg324. Arg481 serves as a coordination point for substrate.

This sequence belongs to the class-I pyridoxal-phosphate-dependent aminotransferase family. Requires pyridoxal 5'-phosphate as cofactor.

It is found in the cytoplasm. The catalysed reaction is an aromatic L-alpha-amino acid + 2-oxoglutarate = an aromatic oxo-acid + L-glutamate. It catalyses the reaction an aromatic L-alpha-amino acid + 4-methylsulfanyl-2-oxobutanoate = an aromatic oxo-acid + L-methionine. The enzyme catalyses L-kynurenine + 2-oxoglutarate = kynurenate + L-glutamate + H2O. It functions in the pathway amino-acid biosynthesis; L-methionine biosynthesis via salvage pathway; L-methionine from S-methyl-5-thio-alpha-D-ribose 1-phosphate: step 6/6. It participates in amino-acid degradation; L-kynurenine degradation; kynurenate from L-kynurenine: step 1/2. In terms of biological role, general aromatic amino acid transaminase involved in several otherwise unrelated metabolic pathways. Mainly involved in tryptophan degradation. Active with phenylalanine, tyrosine and tryptophan as amino donors and with phenylpyruvate, hydroxyphenylpyruvate and pyruvate as amino acceptors. Does not accept glutamate or 2-oxoglutarate as substrates. Also active with methionine, leucine, glutamine and kynurenine. Catalyzes the formation of methionine from 2-keto-4-methylthiobutyrate (KMTB) in the methionine salvage pathway primarily using aromatic amino acids (tyrosine, phenylalanine and tryptophan) as the amino donors. Catalyzes the irreversible transamination of the L-tryptophan metabolite L-kynurenine to form kynurenic acid (KA) with pyruvate as amino acceptor. This chain is Aromatic amino acid aminotransferase 2, found in Saccharomyces cerevisiae (strain ATCC 204508 / S288c) (Baker's yeast).